The chain runs to 172 residues: Large ribosomal subunit protein uL22y (172 aa).

The protein belongs to the universal ribosomal protein uL22 family.

The chain is Large ribosomal subunit protein uL22y from Hordeum vulgare (Barley).